A 341-amino-acid chain; its full sequence is S-adenosylmethionine:tRNA ribosyltransferase-isomerase (341 aa).

Belongs to the QueA family. In terms of assembly, monomer.

It is found in the cytoplasm. The enzyme catalyses 7-aminomethyl-7-carbaguanosine(34) in tRNA + S-adenosyl-L-methionine = epoxyqueuosine(34) in tRNA + adenine + L-methionine + 2 H(+). Its pathway is tRNA modification; tRNA-queuosine biosynthesis. Its function is as follows. Transfers and isomerizes the ribose moiety from AdoMet to the 7-aminomethyl group of 7-deazaguanine (preQ1-tRNA) to give epoxyqueuosine (oQ-tRNA). This Staphylococcus haemolyticus (strain JCSC1435) protein is S-adenosylmethionine:tRNA ribosyltransferase-isomerase.